The primary structure comprises 63 residues: Large ribosomal subunit protein bL28 (63 aa).

The protein belongs to the bacterial ribosomal protein bL28 family.

In Heliobacterium modesticaldum (strain ATCC 51547 / Ice1), this protein is Large ribosomal subunit protein bL28.